Consider the following 777-residue polypeptide: Rho-GTPase-activating protein 8 (777 aa).

The F-BAR domain occupies 3–420 (SSFSNGFWSK…YQEIIQPESD (418 aa)). A coiled-coil region spans residues 117–172 (QKLQTSQQVLTNQIKSYEKKYYTLKKTKSAYYNKCRNLEDYEEESKESNETTSEAI). Residues 213–296 (VLQEIPLQDY…WKDKAFQFAG (84 aa)) form the DEP domain. The region spanning 454-650 (VDVEFLSHRD…DLLTYGPSIF (197 aa)) is the Rho-GAP domain. The tract at residues 667-709 (LYQSSATPRSTDVSPTRPDSISSVRSHTAVESPRSSFEELQPS) is disordered. Polar residues predominate over residues 668–692 (YQSSATPRSTDVSPTRPDSISSVRS). Phosphoserine occurs at positions 676 and 680. At threonine 682 the chain carries Phosphothreonine. At serine 686 the chain carries Phosphoserine. The residue at position 694 (threonine 694) is a Phosphothreonine. The residue at position 698 (serine 698) is a Phosphoserine.

As to quaternary structure, interacts with pak1/shk1. In terms of processing, phosphorylated by pak1/shk1.

The protein resides in the cytoplasm. Functionally, acts in signal transduction. Negatively regulates the pak1/shk1 control pathway. This is Rho-GTPase-activating protein 8 (rga8) from Schizosaccharomyces pombe (strain 972 / ATCC 24843) (Fission yeast).